Here is a 156-residue protein sequence, read N- to C-terminus: Arginine repressor (156 aa).

Belongs to the ArgR family.

Its subcellular location is the cytoplasm. It participates in amino-acid biosynthesis; L-arginine biosynthesis [regulation]. In terms of biological role, regulates arginine biosynthesis genes. The sequence is that of Arginine repressor from Yersinia pseudotuberculosis serotype I (strain IP32953).